We begin with the raw amino-acid sequence, 104 residues long: UPF0145 protein VNG_2432C (104 aa).

The protein belongs to the UPF0145 family.

The polypeptide is UPF0145 protein VNG_2432C (Halobacterium salinarum (strain ATCC 700922 / JCM 11081 / NRC-1) (Halobacterium halobium)).